The following is a 213-amino-acid chain: Skin granule protein (213 aa).

The signal sequence occupies residues 1-26; the sequence is METMYHRFLCIPFLLILGLAQGQSKG. 3 repeat units span residues 27 to 48, 49 to 70, and 71 to 92. The interval 27–104 is 4 X 22 AA approximate tandem repeats; it reads LQTVTTFRTG…PIATFQTGVQ (78 aa). One copy of the 4; truncated repeat lies at 93-104; that stretch reads LQPIATFQTGVQ. A disordered region spans residues 162–213; the sequence is WHGGRNGHKMKKLGKKKHHKNRHGGKNHHKMKKIGKHHGGGRKFGKKHRHHK. Over residues 166–213 the composition is skewed to basic residues; sequence RNGHKMKKLGKKKHHKNRHGGKNHHKMKKIGKHHGGGRKFGKKHRHHK.

It is found in the secreted. The polypeptide is Skin granule protein (sgp) (Xenopus laevis (African clawed frog)).